Consider the following 216-residue polypeptide: Large ribosomal subunit protein uL3 (216 aa).

The residue at position 157 (glutamine 157) is an N5-methylglutamine.

It belongs to the universal ribosomal protein uL3 family. Part of the 50S ribosomal subunit. Forms a cluster with proteins L14 and L19. Post-translationally, methylated by PrmB.

One of the primary rRNA binding proteins, it binds directly near the 3'-end of the 23S rRNA, where it nucleates assembly of the 50S subunit. This Xanthomonas oryzae pv. oryzae (strain MAFF 311018) protein is Large ribosomal subunit protein uL3.